A 1919-amino-acid chain; its full sequence is Disks large homolog 5 (1919 aa).

The disordered stretch occupies residues 98–142 (AEGAGSTYSVLSTMPSDSESSSSLSSVGTTGKAPSPPPLLTDQQV). A compositionally biased stretch (low complexity) spans 109–123 (STMPSDSESSSSLSS). Residues Ser-264 and Ser-295 each carry the phosphoserine modification. Residues 383–599 (LNKATAQNKD…LEKEARFRQL (217 aa)) adopt a coiled-coil conformation. 2 consecutive PDZ domains span residues 620 to 710 (VVEF…RRRK) and 705 to 796 (VVRR…LKVF). Ser-900 carries the post-translational modification Phosphoserine. Disordered regions lie at residues 927–1122 (GVGE…FRPK), 1150–1187 (QEWAPYSPGHSSRHSNPPLYPSRPSVGTVPRSLTPSTT), 1201–1230 (SHRVGPCSSPPAARDAGPQGLHPSVQHQGR), 1245–1264 (EMRATHGSNSLPSSARLGSS), and 1271–1306 (AERIKIPSTPRYPRSVVGSERGSVSHSECSTPPQSP). The residue at position 984 (Thr-984) is a Phosphothreonine. Ser-1000 is subject to Phosphoserine. Thr-1011 carries the post-translational modification Phosphothreonine. Residues 1017 to 1030 (RRSDSIKFQHRLET) show a composition bias toward basic and acidic residues. Ser-1021 carries the phosphoserine modification. A compositionally biased stretch (pro residues) spans 1045–1055 (TSPPSALPPDV). Position 1183 is a phosphothreonine (Thr-1183). Residues Ser-1209 and Ser-1263 each carry the phosphoserine modification. Composition is skewed to low complexity over residues 1252–1264 (SNSLPSSARLGSS) and 1284–1298 (RSVVGSERGSVSHSE). At Ser-1334 the chain carries Phosphoserine. The region spanning 1350-1429 (HVKVQKGSEP…TITILAQYNP (80 aa)) is the PDZ 3 domain. The disordered stretch occupies residues 1434-1493 (LSSHSRSSSHLDPAGTHSTLQGSGTTTPEHPSVIDPLMEQDEGPSTPPAKQSSSRIAGDA). Residues 1449-1462 (THSTLQGSGTTTPE) show a composition bias toward polar residues. A PDZ 4 domain is found at 1501 to 1582 (RVVFIKKSQL…GVRLKVQYRP (82 aa)). Residues 1593–1661 (GDSFYIRALY…PSKYVMDQEF (69 aa)) enclose the SH3 domain. Phosphoserine is present on Ser-1666. A Guanylate kinase-like domain is found at 1722–1905 (DSVSLAYQRV…ICTQILAMVN (184 aa)).

Belongs to the MAGUK family. In terms of assembly, interacts with MPP1. Interacts with CTNNB1 and with the third SH3 domain of SORBS3 to form a ternary complex. Interacts (via coiled-coil domain) with MARK3. Interacts (via PDZ domain 3) with STK3/MST2 and STK4/MST1. Interacts with SCRIB. Interacts with CTNB1, SMO and (via PDZ4 or guanylate kinase-like domain) with KIF7. Highly expressed in normal breast tissues and low-grade breast cancer tissues (at protein level). Highly expressed in the placenta and prostate. Expressed at a lower level in the thyroid, spinal cord, trachea, adrenal gland, skeletal muscle, pancreas, heart, brain, liver and kidney. A short splice product shows more limited expression, being absent from at least the brain.

It localises to the cell junction. The protein resides in the cell membrane. It is found in the postsynaptic density. Its subcellular location is the cytoplasm. The protein localises to the cytoskeleton. It localises to the cilium basal body. In terms of biological role, acts as a regulator of the Hippo signaling pathway. Negatively regulates the Hippo signaling pathway by mediating the interaction of MARK3 with STK3/4, bringing them together to promote MARK3-dependent hyperphosphorylation and inactivation of STK3 kinase activity toward LATS1. Positively regulates the Hippo signaling pathway by mediating the interaction of SCRIB with STK4/MST1 and LATS1 which is important for the activation of the Hippo signaling pathway. Involved in regulating cell proliferation, maintenance of epithelial polarity, epithelial-mesenchymal transition (EMT), cell migration and invasion. Plays an important role in dendritic spine formation and synaptogenesis in cortical neurons; regulates synaptogenesis by enhancing the cell surface localization of N-cadherin. Acts as a positive regulator of hedgehog (Hh) signaling pathway. Plays a critical role in the early point of the SMO activity cycle by interacting with SMO at the ciliary base to induce the accumulation of KIF7 and GLI2 at the ciliary tip for GLI2 activation. This Homo sapiens (Human) protein is Disks large homolog 5 (DLG5).